We begin with the raw amino-acid sequence, 475 residues long: Tesmin (475 aa).

Residues serine 34 and serine 67 each carry the phosphoserine modification. Positions 263–372 (SGPALQGPPK…KCIACKNYEE (110 aa)) constitute a CRC domain.

It belongs to the lin-54 family.

Its subcellular location is the cytoplasm. The protein localises to the nucleus. Its function is as follows. May have a role in spermatogenesis. This chain is Tesmin, found in Rattus norvegicus (Rat).